A 1041-amino-acid polypeptide reads, in one-letter code: Sodium/potassium-transporting ATPase subunit alpha (1041 aa).

4 helical membrane-spanning segments follow: residues 115–135 (FGGF…AYSI), 147–167 (NLYL…FSYY), 312–332 (LITG…FILG), and 338–358 (AVIF…LATV). Asp-394 (4-aspartylphosphate intermediate) is an active-site residue. An ATP-binding site is contributed by Lys-526. Helical transmembrane passes span 808–828 (FLAF…ILCI), 870–890 (MAYG…YFVI), 935–955 (TCHT…LIIC), and 970–990 (WALN…SYCP).

It belongs to the cation transport ATPase (P-type) (TC 3.A.3) family. Type IIC subfamily. The sodium/potassium-transporting ATPase is composed of a catalytic alpha subunit, an auxiliary non-catalytic beta subunit and an additional regulatory subunit. High levels are found in some adult tissues: Malpighian tubules, indirect flight muscles, tubular leg muscles and throughout the nervous system (brain, optic lobes, retina and ventral thoracic neuromere). Lower levels are detected at the posterior end where the reproductive organs and rectum are located.

Its subcellular location is the cell membrane. The catalysed reaction is K(+)(out) + Na(+)(in) + ATP + H2O = K(+)(in) + Na(+)(out) + ADP + phosphate + H(+). Its function is as follows. This is the catalytic component of the active enzyme, which catalyzes the hydrolysis of ATP coupled with the exchange of sodium and potassium ions across the plasma membrane. This action creates the electrochemical gradient of sodium and potassium ions, providing the energy for active transport of various nutrients. In Drosophila melanogaster (Fruit fly), this protein is Sodium/potassium-transporting ATPase subunit alpha (Atpalpha).